A 238-amino-acid chain; its full sequence is Putative ABC transporter ATP-binding protein AF_1841 (238 aa).

Residues 8–238 (IEADSVSYDY…EELLEKAGVI (231 aa)) enclose the ABC transporter domain. Residue 41 to 48 (GANGSGKS) coordinates ATP.

It belongs to the ABC transporter superfamily.

It localises to the cell membrane. Functionally, probably part of an ABC transporter complex. Responsible for energy coupling to the transport system. In Archaeoglobus fulgidus (strain ATCC 49558 / DSM 4304 / JCM 9628 / NBRC 100126 / VC-16), this protein is Putative ABC transporter ATP-binding protein AF_1841.